Here is a 287-residue protein sequence, read N- to C-terminus: Deoxyuridine 5'-triphosphate nucleotidohydrolase (287 aa).

173–175 contacts substrate; the sequence is RSG. Low complexity predominate over residues 264–275; it reads SSSKDTSDSQMS. Residues 264–287 are disordered; the sequence is SSSKDTSDSQMSRGDAGLGSSGLM.

It belongs to the dUTPase family. The cofactor is Mg(2+).

It catalyses the reaction dUTP + H2O = dUMP + diphosphate + H(+). Functionally, involved in nucleotide metabolism: produces dUMP, the immediate precursor of thymidine nucleotides and decreases the intracellular concentration of dUTP to avoid uracil incorporation into viral DNA. The protein is Deoxyuridine 5'-triphosphate nucleotidohydrolase of Saimiriine herpesvirus 2 (strain 11) (SaHV-2).